A 375-amino-acid polypeptide reads, in one-letter code: 23S rRNA (uracil(747)-C(5))-methyltransferase RlmC (375 aa).

[4Fe-4S] cluster is bound by residues cysteine 3, cysteine 11, cysteine 14, and cysteine 87. The S-adenosyl-L-methionine site is built by glutamine 212, phenylalanine 241, glutamate 262, and asparagine 307. Cysteine 334 serves as the catalytic Nucleophile.

This sequence belongs to the class I-like SAM-binding methyltransferase superfamily. RNA M5U methyltransferase family. RlmC subfamily.

It carries out the reaction uridine(747) in 23S rRNA + S-adenosyl-L-methionine = 5-methyluridine(747) in 23S rRNA + S-adenosyl-L-homocysteine + H(+). Its function is as follows. Catalyzes the formation of 5-methyl-uridine at position 747 (m5U747) in 23S rRNA. This chain is 23S rRNA (uracil(747)-C(5))-methyltransferase RlmC, found in Shigella sonnei (strain Ss046).